A 279-amino-acid polypeptide reads, in one-letter code: Oxygen-dependent coproporphyrinogen-III oxidase (279 aa).

A substrate-binding site is contributed by S102. The a divalent metal cation site is built by H106 and H116. The active-site Proton donor is H116. 118 to 120 is a binding site for substrate; sequence NTR. H149 and H179 together coordinate a divalent metal cation. An important for dimerization region spans residues 244–279; sequence YVEFNLLYDRGTKFGLMTDGNVEAILMSLPPEVKFN.

This sequence belongs to the aerobic coproporphyrinogen-III oxidase family. As to quaternary structure, homodimer. It depends on a divalent metal cation as a cofactor.

The protein localises to the cytoplasm. It catalyses the reaction coproporphyrinogen III + O2 + 2 H(+) = protoporphyrinogen IX + 2 CO2 + 2 H2O. The protein operates within porphyrin-containing compound metabolism; protoporphyrin-IX biosynthesis; protoporphyrinogen-IX from coproporphyrinogen-III (O2 route): step 1/1. Involved in the heme biosynthesis. Catalyzes the aerobic oxidative decarboxylation of propionate groups of rings A and B of coproporphyrinogen-III to yield the vinyl groups in protoporphyrinogen-IX. In Rickettsia conorii (strain ATCC VR-613 / Malish 7), this protein is Oxygen-dependent coproporphyrinogen-III oxidase.